The sequence spans 916 residues: MLTNIAKKIFGSRNDRLLKQYRKSVARINALEEQMQALSDADLQAKTAEFKQRLADGQTLDGILPEAFAVCREASRRTLGMRHFDVQLIGGMVLHDGKIAEMRTGEGKTLVATLAVYLNALAGKGVHVVTVNDYLASRDAGIMEPLYNFLGLTVGVIISDMQPFDRQNAYAADITYGTNNEFGFDYLRDNMVTDQYDKVQRELNFAVVDEVDSILIDEARTPLIISGQADDNIQLYQIMNTVPPHLVRQETEEGEGDYWVDEKAHQVILSEAGHEHAEQILTQMGLLAENDSLYSAANIALMHHLMAALRAHTLFHKDQHYVIQDGEIVIVDEFTGRLMSGRRWSEGLHQAVEAKEGVEIKRENQTLASITFQNYFRLYTKLSGMTGTADTEAFEFQSIYNLETVIIPTNRPVQRKDFNDQIFRSAEEKFEAVVKDIEECHKRGQPVLVGTTSIENSELVSHLLQKAGLPHNVLNAKEHEREALIVAQAGKVGAITVATNMAGRGTDIVLGGNLKHQTDAIRADEALSDEEKQAQISALEDGWQAEHDKVMEAGGLHIIGTERHESRRIDNQLRGRSGRQGDPGSSRFYLSFEDPLLRLFALDRAAAILNRLAPERGVAIEHNLLTRQIEGAQRKVEGRNFDMRKQVLEYDDVANEQRKVIYSQRNEILTSKDISDLMKEIRSDVVSDLVDTYMPPDSMEEQWDIPTLENRLAAEFRLHEDIQSWLKADNAIDGQDIKERLIERIENEYAAKTELVGKQAMADFERNVMLQVIDNQWREHLAAMDYLRQGIHLRSYAQKNPKQEYKREAFTMFQDLWNGIKFHIASLLTSVQIEQNPVAVVEEQPIGNIQSIHSESPDMEELLGQSQTDLVTEAFNPDGTDFSPEALEARGQIVHRNDPCPCGSGLKYKQCHGKLA.

ATP is bound by residues glutamine 87, 105 to 109 (GEGKT), and aspartate 507. The Zn(2+) site is built by cysteine 900, cysteine 902, cysteine 911, and histidine 912.

Belongs to the SecA family. As to quaternary structure, monomer and homodimer. Part of the essential Sec protein translocation apparatus which comprises SecA, SecYEG and auxiliary proteins SecDF-YajC and YidC. The cofactor is Zn(2+).

Its subcellular location is the cell inner membrane. It is found in the cytoplasm. The catalysed reaction is ATP + H2O + cellular proteinSide 1 = ADP + phosphate + cellular proteinSide 2.. Its function is as follows. Part of the Sec protein translocase complex. Interacts with the SecYEG preprotein conducting channel. Has a central role in coupling the hydrolysis of ATP to the transfer of proteins into and across the cell membrane, serving both as a receptor for the preprotein-SecB complex and as an ATP-driven molecular motor driving the stepwise translocation of polypeptide chains across the membrane. In Neisseria meningitidis serogroup A / serotype 4A (strain DSM 15465 / Z2491), this protein is Protein translocase subunit SecA.